Here is an 895-residue protein sequence, read N- to C-terminus: Serine/threonine-protein kinase-like protein ACR4 (895 aa).

Positions 1-29 (MRMFETRAREWILLVKLVLFTSIWQLASA) are cleaved as a signal peptide. Residues 30 to 434 (LGSMSSIAIS…FWSLQLPIAT (405 aa)) lie on the Extracellular side of the membrane. A run of 7 repeats spans residues 38–73 (ISYG…GTPG), 77–112 (FIGL…GVPQ), 130–167 (LCGL…VFDK), 169–202 (LHSL…QVIS), 210–245 (FQKI…EEVT), 262–296 (LLAV…TPAP), and 301–339 (FYDL…AVSP). The 7 X 36 AA repeats stretch occupies residues 38–339 (ISYGEGGSVF…PASIPLAVSP (302 aa)). Residues Asn-158 and Asn-196 are each glycosylated (N-linked (GlcNAc...) asparagine). A glycan (N-linked (GlcNAc...) asparagine) is linked at Asn-290. The stretch at 346-395 (PCPPGTHELSNQENSPCKFTGSHICLPCSTSCPPGMYQKSVCTERSDQVC) is one TNFR-Cys repeat. 3 cysteine pairs are disulfide-bonded: Cys-347-Cys-370, Cys-373-Cys-387, and Cys-377-Cys-395. Residues Asn-398 and Asn-410 are each glycosylated (N-linked (GlcNAc...) asparagine). The helical transmembrane segment at 435–455 (AEIGFALFLVAVVSITAALYI) threads the bilayer. Topologically, residues 456–895 (RYRLRNCRCS…GQSLFLHHNF (440 aa)) are cytoplasmic. Ser-475 is modified (phosphoserine). The 278-residue stretch at 512–789 (FKEESIVGKG…KVTTALERAL (278 aa)) folds into the Protein kinase domain. ATP-binding positions include 518-526 (VGKGSFSCV) and Lys-540. Asp-641 (proton acceptor) is an active-site residue. The tract at residues 818 to 895 (SWRIGSKRSG…GQSLFLHHNF (78 aa)) is disordered. The segment covering 865–877 (EGRKQQEALRSLE) has biased composition (basic and acidic residues).

Belongs to the protein kinase superfamily. Ser/Thr protein kinase family. As to quaternary structure, homodimer. Interacts with PP2A3. Autophosphorylated and phosphorylated by ALE2. In terms of tissue distribution, expressed in seedlings, floral buds, siliques, leaves, shoot apical meristems (SAM), and, to a lower extent, in roots.

It localises to the cell membrane. It is found in the endosome. The protein resides in the multivesicular body membrane. The enzyme catalyses L-seryl-[protein] + ATP = O-phospho-L-seryl-[protein] + ADP + H(+). It catalyses the reaction L-threonyl-[protein] + ATP = O-phospho-L-threonyl-[protein] + ADP + H(+). In terms of biological role, controls formative cell division in meristems, including root tips and lateral root initiation zones of the pericycle, in response to CLE40 signal. Acts with CLE40p peptide as a ligand-receptor pair in a signal transduction pathway, coordinating movement of the root tip and organization of cell divisions in the root meristem. Required during embryogenesis and development, probably for the differentiation of protoderm and epidermal cells. Involved in the regulation of cellular organization during the development of sepal margins and ovule integument outgrowth and promotes giant cell formation. Can phosphorylate ALE2. The sequence is that of Serine/threonine-protein kinase-like protein ACR4 from Arabidopsis thaliana (Mouse-ear cress).